The primary structure comprises 159 residues: uncharacterized protein (159 aa).

Residues Met1–Ala20 form the signal peptide.

This is an uncharacterized protein from Pasteurella multocida (strain Pm70).